The chain runs to 47 residues: Exoenzymes regulatory protein AepH (47 aa).

2 stretches are compositionally biased toward basic and acidic residues: residues 1–17 (MGQE…QDGH) and 33–47 (TKKE…DANV). The interval 1 to 47 (MGQEPKGIESRKIQDGHVRKKVGRQQGLWVRTTKKEKFSRMSRDANV) is disordered.

Its function is as follows. Involved in the control of extracellular enzymes production. Stimulates PEL, PEH, CEL, and PRT production. The chain is Exoenzymes regulatory protein AepH (aepH) from Pectobacterium carotovorum subsp. carotovorum (Erwinia carotovora subsp. carotovora).